The primary structure comprises 167 residues: N-alpha-acetyltransferase (167 aa).

Residues 12 to 167 (YRIRNARLTD…EDAYLMAAPL (156 aa)) enclose the N-acetyltransferase domain. Substrate is bound at residue tyrosine 37. Position 88 (histidine 88) interacts with Zn(2+). Acetyl-CoA is bound by residues 92–94 (IAV) and 100–105 (RLGIGT). Glutamate 127 is a binding site for Zn(2+). Acetyl-CoA contacts are provided by residues asparagine 132 and 139 to 141 (YKK). Tyrosine 154 serves as a coordination point for substrate.

It belongs to the acetyltransferase family. ARD1 subfamily. In terms of assembly, homodimer.

The protein resides in the cytoplasm. The enzyme catalyses N-terminal L-alanyl-[protein] + acetyl-CoA = N-terminal N(alpha)-acetyl-L-alanyl-[protein] + CoA + H(+). The catalysed reaction is N-terminal L-seryl-[protein] + acetyl-CoA = N-terminal N(alpha)-acetyl-L-seryl-[protein] + CoA + H(+). It carries out the reaction N-terminal L-methionyl-L-leucyl-[protein] + acetyl-CoA = N-terminal N(alpha)-acetyl-L-methionyl-L-leucyl-[protein] + CoA + H(+). It catalyses the reaction N-terminal L-methionyl-L-glutamyl-[protein] + acetyl-CoA = N-terminal N(alpha)-acetyl-L-methionyl-L-glutamyl-[protein] + CoA + H(+). Its function is as follows. Displays alpha (N-terminal) acetyltransferase activity. Catalyzes the covalent attachment of an acetyl moiety from acetyl-CoA to the free alpha-amino group at the N-terminus of a protein. The protein is N-alpha-acetyltransferase of Sulfurisphaera tokodaii (strain DSM 16993 / JCM 10545 / NBRC 100140 / 7) (Sulfolobus tokodaii).